Reading from the N-terminus, the 352-residue chain is Farnesyl pyrophosphate synthase (352 aa).

3 residues coordinate isopentenyl diphosphate: Lys-52, Arg-55, and Gln-93. Mg(2+) contacts are provided by Asp-100 and Asp-104. Arg-109 contributes to the dimethylallyl diphosphate binding site. Arg-110 contacts isopentenyl diphosphate. Residues Lys-197, Thr-198, Gln-237, Lys-254, and Lys-263 each contribute to the dimethylallyl diphosphate site.

This sequence belongs to the FPP/GGPP synthase family. The cofactor is Mg(2+).

It carries out the reaction isopentenyl diphosphate + dimethylallyl diphosphate = (2E)-geranyl diphosphate + diphosphate. It catalyses the reaction isopentenyl diphosphate + (2E)-geranyl diphosphate = (2E,6E)-farnesyl diphosphate + diphosphate. It functions in the pathway isoprenoid biosynthesis; farnesyl diphosphate biosynthesis; farnesyl diphosphate from geranyl diphosphate and isopentenyl diphosphate: step 1/1. The protein operates within isoprenoid biosynthesis; geranyl diphosphate biosynthesis; geranyl diphosphate from dimethylallyl diphosphate and isopentenyl diphosphate: step 1/1. Its function is as follows. Farnesyl pyrophosphate synthase; part of the second module of ergosterol biosynthesis pathway that includes the middle steps of the pathway. ERG20 catalyzes the sequential condensation of isopentenyl pyrophosphate with dimethylallyl pyrophosphate, and then with the resultant geranylpyrophosphate to the ultimate product farnesyl pyrophosphate. The second module is carried out in the vacuole and involves the formation of farnesyl diphosphate, which is also an important intermediate in the biosynthesis of ubiquinone, dolichol, heme and prenylated proteins. Activity by the mevalonate kinase ERG12 first converts mevalonate into 5-phosphomevalonate. 5-phosphomevalonate is then further converted to 5-diphosphomevalonate by the phosphomevalonate kinase ERG8. The diphosphomevalonate decarboxylase MVD1/ERG19 then produces isopentenyl diphosphate. The isopentenyl-diphosphate delta-isomerase IDI1 then catalyzes the 1,3-allylic rearrangement of the homoallylic substrate isopentenyl (IPP) to its highly electrophilic allylic isomer, dimethylallyl diphosphate (DMAPP). Finally the farnesyl diphosphate synthase ERG20 catalyzes the sequential condensation of isopentenyl pyrophosphate with dimethylallyl pyrophosphate, and then with the resultant geranylpyrophosphate to the ultimate product farnesyl pyrophosphate. The sequence is that of Farnesyl pyrophosphate synthase (ERG20) from Saccharomyces cerevisiae (strain ATCC 204508 / S288c) (Baker's yeast).